We begin with the raw amino-acid sequence, 201 residues long: Large ribosomal subunit protein uL4 (201 aa).

A disordered region spans residues R44–A68.

This sequence belongs to the universal ribosomal protein uL4 family. Part of the 50S ribosomal subunit.

In terms of biological role, one of the primary rRNA binding proteins, this protein initially binds near the 5'-end of the 23S rRNA. It is important during the early stages of 50S assembly. It makes multiple contacts with different domains of the 23S rRNA in the assembled 50S subunit and ribosome. Forms part of the polypeptide exit tunnel. The protein is Large ribosomal subunit protein uL4 of Buchnera aphidicola subsp. Acyrthosiphon pisum (strain APS) (Acyrthosiphon pisum symbiotic bacterium).